The sequence spans 212 residues: Protein-L-isoaspartate O-methyltransferase (212 aa).

The active site involves Ser62.

It belongs to the methyltransferase superfamily. L-isoaspartyl/D-aspartyl protein methyltransferase family.

Its subcellular location is the cytoplasm. It carries out the reaction [protein]-L-isoaspartate + S-adenosyl-L-methionine = [protein]-L-isoaspartate alpha-methyl ester + S-adenosyl-L-homocysteine. Its function is as follows. Catalyzes the methyl esterification of L-isoaspartyl residues in peptides and proteins that result from spontaneous decomposition of normal L-aspartyl and L-asparaginyl residues. It plays a role in the repair and/or degradation of damaged proteins. This is Protein-L-isoaspartate O-methyltransferase from Pseudoalteromonas translucida (strain TAC 125).